Consider the following 196-residue polypeptide: HTH-type transcriptional regulator BetI (196 aa).

An HTH tetR-type domain is found at 8 to 68 (PIRRSQLIAA…ATMRHLMQAL (61 aa)). The H-T-H motif DNA-binding region spans 31 to 50 (SIAYIARLAGVSNGIISHYF).

It functions in the pathway amine and polyamine biosynthesis; betaine biosynthesis via choline pathway [regulation]. Its function is as follows. Repressor involved in the biosynthesis of the osmoprotectant glycine betaine. It represses transcription of the choline transporter BetT and the genes of BetAB involved in the synthesis of glycine betaine. This chain is HTH-type transcriptional regulator BetI, found in Ectopseudomonas mendocina (strain ymp) (Pseudomonas mendocina).